The chain runs to 103 residues: Large ribosomal subunit protein bL21 (103 aa).

The protein belongs to the bacterial ribosomal protein bL21 family. As to quaternary structure, part of the 50S ribosomal subunit. Contacts protein L20.

In terms of biological role, this protein binds to 23S rRNA in the presence of protein L20. This is Large ribosomal subunit protein bL21 from Acidovorax ebreus (strain TPSY) (Diaphorobacter sp. (strain TPSY)).